A 438-amino-acid polypeptide reads, in one-letter code: ATP-dependent protease ATPase subunit HslU (438 aa).

Residues valine 18, glycine 60–glutamate 65, aspartate 252, glutamate 317, and arginine 389 contribute to the ATP site.

It belongs to the ClpX chaperone family. HslU subfamily. A double ring-shaped homohexamer of HslV is capped on each side by a ring-shaped HslU homohexamer. The assembly of the HslU/HslV complex is dependent on binding of ATP.

The protein localises to the cytoplasm. Functionally, ATPase subunit of a proteasome-like degradation complex; this subunit has chaperone activity. The binding of ATP and its subsequent hydrolysis by HslU are essential for unfolding of protein substrates subsequently hydrolyzed by HslV. HslU recognizes the N-terminal part of its protein substrates and unfolds these before they are guided to HslV for hydrolysis. This is ATP-dependent protease ATPase subunit HslU from Saccharophagus degradans (strain 2-40 / ATCC 43961 / DSM 17024).